A 216-amino-acid chain; its full sequence is Somatotropin (216 aa).

The signal sequence occupies residues 1–26; it reads MAASPRNSVLLAFALLCLPWPQEVGA. Zn(2+) is bound at residue histidine 45. A disulfide bridge connects residues cysteine 78 and cysteine 189. Serine 131 bears the Phosphoserine mark. Glutamate 198 lines the Zn(2+) pocket. A disulfide bond links cysteine 206 and cysteine 214.

Belongs to the somatotropin/prolactin family.

The protein resides in the secreted. Functionally, plays an important role in growth control. Its major role in stimulating body growth is to stimulate the liver and other tissues to secrete IGF1. It stimulates both the differentiation and proliferation of myoblasts. It also stimulates amino acid uptake and protein synthesis in muscle and other tissues. This is Somatotropin (GH1) from Canis lupus familiaris (Dog).